Here is a 310-residue protein sequence, read N- to C-terminus: Tyrosine recombinase XerC (310 aa).

In terms of domain architecture, Core-binding (CB) spans N11 to V97. The 181-residue stretch at P118–D298 folds into the Tyr recombinase domain. Catalysis depends on residues R157, K181, H250, R253, and H276. The active-site O-(3'-phospho-DNA)-tyrosine intermediate is Y285.

The protein belongs to the 'phage' integrase family. XerC subfamily. In terms of assembly, forms a cyclic heterotetrameric complex composed of two molecules of XerC and two molecules of XerD.

The protein localises to the cytoplasm. In terms of biological role, site-specific tyrosine recombinase, which acts by catalyzing the cutting and rejoining of the recombining DNA molecules. The XerC-XerD complex is essential to convert dimers of the bacterial chromosome into monomers to permit their segregation at cell division. It also contributes to the segregational stability of plasmids. The protein is Tyrosine recombinase XerC of Vibrio atlanticus (strain LGP32) (Vibrio splendidus (strain Mel32)).